A 431-amino-acid chain; its full sequence is Gamma-glutamyl phosphate reductase (431 aa).

It belongs to the gamma-glutamyl phosphate reductase family.

Its subcellular location is the cytoplasm. The catalysed reaction is L-glutamate 5-semialdehyde + phosphate + NADP(+) = L-glutamyl 5-phosphate + NADPH + H(+). Its pathway is amino-acid biosynthesis; L-proline biosynthesis; L-glutamate 5-semialdehyde from L-glutamate: step 2/2. Catalyzes the NADPH-dependent reduction of L-glutamate 5-phosphate into L-glutamate 5-semialdehyde and phosphate. The product spontaneously undergoes cyclization to form 1-pyrroline-5-carboxylate. In Acetivibrio thermocellus (strain ATCC 27405 / DSM 1237 / JCM 9322 / NBRC 103400 / NCIMB 10682 / NRRL B-4536 / VPI 7372) (Clostridium thermocellum), this protein is Gamma-glutamyl phosphate reductase.